The primary structure comprises 329 residues: Malate dehydrogenase (329 aa).

Gly12–Gly18 serves as a coordination point for NAD(+). Substrate contacts are provided by Arg93 and Arg99. Residues Asn106, Gln113, and Val130–Asn132 contribute to the NAD(+) site. Residues Asn132 and Arg166 each contribute to the substrate site. His191 acts as the Proton acceptor in catalysis.

This sequence belongs to the LDH/MDH superfamily. MDH type 2 family.

The enzyme catalyses (S)-malate + NAD(+) = oxaloacetate + NADH + H(+). In terms of biological role, catalyzes the reversible oxidation of malate to oxaloacetate. This is Malate dehydrogenase from Aromatoleum aromaticum (strain DSM 19018 / LMG 30748 / EbN1) (Azoarcus sp. (strain EbN1)).